The primary structure comprises 273 residues: Nitrogenase iron protein 4 (273 aa).

8-15 (GKGGIGKS) contributes to the ATP binding site. C94 provides a ligand contact to [4Fe-4S] cluster. R97 bears the ADP-ribosylarginine; by dinitrogenase reductase ADP-ribosyltransferase mark. A [4Fe-4S] cluster-binding site is contributed by C129.

Belongs to the NifH/BchL/ChlL family. Homodimer. It depends on [4Fe-4S] cluster as a cofactor. The reversible ADP-ribosylation of Arg-97 inactivates the nitrogenase reductase and regulates nitrogenase activity.

It catalyses the reaction N2 + 8 reduced [2Fe-2S]-[ferredoxin] + 16 ATP + 16 H2O = H2 + 8 oxidized [2Fe-2S]-[ferredoxin] + 2 NH4(+) + 16 ADP + 16 phosphate + 6 H(+). Its function is as follows. The key enzymatic reactions in nitrogen fixation are catalyzed by the nitrogenase complex, which has 2 components: the iron protein and the molybdenum-iron protein. The chain is Nitrogenase iron protein 4 (nifH4) from Clostridium pasteurianum.